We begin with the raw amino-acid sequence, 198 residues long: Ras-like protein 2 (198 aa).

18–25 (GDGGVGKS) is a GTP binding site. Positions 40 to 48 (YDPTIEDSY) match the Effector region motif. Residues 65-69 (DTAGQ) and 124-127 (NKCD) contribute to the GTP site. Cysteine methyl ester is present on C195. C195 carries S-farnesyl cysteine lipidation. Positions 196–198 (IVM) are cleaved as a propeptide — removed in mature form.

Belongs to the small GTPase superfamily. Ras family.

The protein resides in the cell membrane. It catalyses the reaction GTP + H2O = GDP + phosphate + H(+). Its activity is regulated as follows. Alternates between an inactive form bound to GDP and an active form bound to GTP. Activated by a guanine nucleotide-exchange factor (GEF) and inactivated by a GTPase-activating protein (GAP). The sequence is that of Ras-like protein 2 (RAS2) from Mucor circinelloides f. lusitanicus (Mucor racemosus var. lusitanicus).